A 357-amino-acid chain; its full sequence is UDP-N-acetylglucosamine--N-acetylmuramyl-(pentapeptide) pyrophosphoryl-undecaprenol N-acetylglucosamine transferase (357 aa).

UDP-N-acetyl-alpha-D-glucosamine is bound by residues 12 to 14, Asn-124, Arg-162, Ser-190, Ile-243, 262 to 267, and Gln-288; these read TGG and ALTVAE.

It belongs to the glycosyltransferase 28 family. MurG subfamily.

Its subcellular location is the cell inner membrane. It carries out the reaction di-trans,octa-cis-undecaprenyl diphospho-N-acetyl-alpha-D-muramoyl-L-alanyl-D-glutamyl-meso-2,6-diaminopimeloyl-D-alanyl-D-alanine + UDP-N-acetyl-alpha-D-glucosamine = di-trans,octa-cis-undecaprenyl diphospho-[N-acetyl-alpha-D-glucosaminyl-(1-&gt;4)]-N-acetyl-alpha-D-muramoyl-L-alanyl-D-glutamyl-meso-2,6-diaminopimeloyl-D-alanyl-D-alanine + UDP + H(+). The protein operates within cell wall biogenesis; peptidoglycan biosynthesis. Cell wall formation. Catalyzes the transfer of a GlcNAc subunit on undecaprenyl-pyrophosphoryl-MurNAc-pentapeptide (lipid intermediate I) to form undecaprenyl-pyrophosphoryl-MurNAc-(pentapeptide)GlcNAc (lipid intermediate II). In Alcanivorax borkumensis (strain ATCC 700651 / DSM 11573 / NCIMB 13689 / SK2), this protein is UDP-N-acetylglucosamine--N-acetylmuramyl-(pentapeptide) pyrophosphoryl-undecaprenol N-acetylglucosamine transferase.